The sequence spans 105 residues: Small ribosomal subunit protein uS10 (105 aa).

This sequence belongs to the universal ribosomal protein uS10 family. Part of the 30S ribosomal subunit.

In terms of biological role, involved in the binding of tRNA to the ribosomes. This is Small ribosomal subunit protein uS10 from Cyanothece sp. (strain PCC 7425 / ATCC 29141).